A 901-amino-acid chain; its full sequence is Translation initiation factor IF-2 (901 aa).

Residues 48 to 313 (HLNREHGGSS…SSLQQGFTKP (266 aa)) form a disordered region. The segment covering 68–82 (STLSVPGTGGKSKSV) has biased composition (polar residues). A compositionally biased stretch (basic and acidic residues) spans 106-226 (ALAKREAEEQ…RMAEANEGKW (121 aa)). A compositionally biased stretch (basic residues) spans 263–277 (ARGRGGKAAKQKKGS). Residues 278–291 (KLSESKADREEARA) are compositionally biased toward basic and acidic residues. In terms of domain architecture, tr-type G spans 400–569 (PRAPVVTIMG…LLQAEVLELK (170 aa)). The tract at residues 409–416 (GHVDHGKT) is G1. 409–416 (GHVDHGKT) provides a ligand contact to GTP. The tract at residues 434–438 (GITQH) is G2. Residues 455-458 (DTPG) are G3. Residues 455-459 (DTPGH) and 509-512 (NKID) contribute to the GTP site. Positions 509 to 512 (NKID) are G4. Residues 545–547 (SAK) form a G5 region.

It belongs to the TRAFAC class translation factor GTPase superfamily. Classic translation factor GTPase family. IF-2 subfamily.

The protein resides in the cytoplasm. One of the essential components for the initiation of protein synthesis. Protects formylmethionyl-tRNA from spontaneous hydrolysis and promotes its binding to the 30S ribosomal subunits. Also involved in the hydrolysis of GTP during the formation of the 70S ribosomal complex. The polypeptide is Translation initiation factor IF-2 (Edwardsiella ictaluri (strain 93-146)).